Consider the following 338-residue polypeptide: Glycerol-3-phosphate dehydrogenase [NAD(P)+] (338 aa).

NADPH is bound by residues S13, W14, and K108. Residues K108, G139, and S141 each contribute to the sn-glycerol 3-phosphate site. A143 contributes to the NADPH binding site. Residues K194, D247, S257, R258, and N259 each coordinate sn-glycerol 3-phosphate. K194 functions as the Proton acceptor in the catalytic mechanism. R258 serves as a coordination point for NADPH. NADPH is bound by residues V282 and E284.

This sequence belongs to the NAD-dependent glycerol-3-phosphate dehydrogenase family.

It localises to the cytoplasm. It catalyses the reaction sn-glycerol 3-phosphate + NAD(+) = dihydroxyacetone phosphate + NADH + H(+). The enzyme catalyses sn-glycerol 3-phosphate + NADP(+) = dihydroxyacetone phosphate + NADPH + H(+). It functions in the pathway membrane lipid metabolism; glycerophospholipid metabolism. Functionally, catalyzes the reduction of the glycolytic intermediate dihydroxyacetone phosphate (DHAP) to sn-glycerol 3-phosphate (G3P), the key precursor for phospholipid synthesis. This Streptococcus pyogenes serotype M12 (strain MGAS9429) protein is Glycerol-3-phosphate dehydrogenase [NAD(P)+].